The following is a 345-amino-acid chain: Matrix protein (345 aa).

A disordered region spans residues 148 to 185 (KKKSKAKSAEGPSASTEDIKDSDTKGNQDIGDNGDLNS). Positions 164 to 173 (EDIKDSDTKG) are enriched in basic and acidic residues.

It localises to the virion. The protein is Matrix protein (M2) of Aphis (Hairy beggarticks).